A 656-amino-acid chain; its full sequence is Heat shock 70 kDa protein, mitochondrial (656 aa).

The transit peptide at 1 to 23 directs the protein to the mitochondrion; the sequence is MFARRLRGAGSLAAASLARWQSS. The tract at residues 624 to 656 is disordered; the sequence is EYQQAAAGNSSSSSGNTDSSQGEQQQQGDQQKQ. Over residues 626-656 the composition is skewed to low complexity; it reads QQAAAGNSSSSSGNTDSSQGEQQQQGDQQKQ.

This sequence belongs to the heat shock protein 70 family.

The protein resides in the mitochondrion matrix. It localises to the kinetoplast. In terms of biological role, may participate in eukaryotic mitochondrial DNA replication. In Trypanosoma cruzi, this protein is Heat shock 70 kDa protein, mitochondrial (MTP70).